We begin with the raw amino-acid sequence, 197 residues long: Probable GTP-binding protein EngB (197 aa).

The 176-residue stretch at Thr-22–Gln-197 folds into the EngB-type G domain. Residues Gly-30–Ser-37, Gly-57–Leu-61, Asp-75–Gly-78, Thr-142–Asp-145, and Phe-177–Ser-179 contribute to the GTP site. The Mg(2+) site is built by Ser-37 and Thr-59.

Belongs to the TRAFAC class TrmE-Era-EngA-EngB-Septin-like GTPase superfamily. EngB GTPase family. Requires Mg(2+) as cofactor.

Functionally, necessary for normal cell division and for the maintenance of normal septation. The sequence is that of Probable GTP-binding protein EngB from Francisella tularensis subsp. tularensis (strain FSC 198).